A 1037-amino-acid chain; its full sequence is Huntingtin-interacting protein 1 (1037 aa).

Residues glutamate 32–proline 160 form the ENTH domain. Serine 338 bears the Phosphoserine mark. Positions valine 368 to glutamate 644 form a coiled coil. The interval serine 410 to glutamate 491 is pDED. The region spanning glycine 771–alanine 1012 is the I/LWEQ domain. The important for actin binding stretch occupies residues arginine 867 to lysine 924. Residues glycine 1017–glutamate 1037 are disordered.

It belongs to the SLA2 family. In terms of assembly, homodimer. Binds actin. Binds HTT (via N-terminus). This interaction is restricted to the brain. Binds to IFT57. In normal conditions, it poorly interacts with IFT57, HIP1 being strongly associated with HTT. However, in mutant HTT proteins with a long poly-Gln region, interaction between HTT and HIP1 is inhibited, promoting the interaction between HIP1 and IFT57. Interacts with CLTB (via N-terminus). Interacts (via coiled coil domain) with AR. Interacts with AP2A1, AP2A2, CLTC and HIP1R. Interacts with GRIA1, GRIN2A and GRIN2B. In terms of tissue distribution, ubiquitously expressed with the highest level in brain. Expression is up-regulated in prostate and colon cancer.

It localises to the cytoplasm. The protein resides in the nucleus. It is found in the endomembrane system. The protein localises to the cytoplasmic vesicle. Its subcellular location is the clathrin-coated vesicle membrane. Its function is as follows. Plays a role in clathrin-mediated endocytosis and trafficking. Involved in regulating AMPA receptor trafficking in the central nervous system in an NMDA-dependent manner. Regulates presynaptic nerve terminal activity. Enhances androgen receptor (AR)-mediated transcription. May act as a proapoptotic protein that induces cell death by acting through the intrinsic apoptosis pathway. Binds 3-phosphoinositides (via ENTH domain). May act through the ENTH domain to promote cell survival by stabilizing receptor tyrosine kinases following ligand-induced endocytosis. May play a functional role in the cell filament networks. May be required for differentiation, proliferation, and/or survival of somatic and germline progenitors. This Homo sapiens (Human) protein is Huntingtin-interacting protein 1 (HIP1).